The chain runs to 283 residues: Elongation factor Ts (283 aa).

Positions 80-83 (TDFV) are involved in Mg(2+) ion dislocation from EF-Tu.

It belongs to the EF-Ts family.

The protein localises to the cytoplasm. In terms of biological role, associates with the EF-Tu.GDP complex and induces the exchange of GDP to GTP. It remains bound to the aminoacyl-tRNA.EF-Tu.GTP complex up to the GTP hydrolysis stage on the ribosome. In Citrobacter koseri (strain ATCC BAA-895 / CDC 4225-83 / SGSC4696), this protein is Elongation factor Ts.